The primary structure comprises 222 residues: Pro-opiomelanocortin-1 (222 aa).

Residues 1 to 28 (MVRGERMLCPAWLLALAVLCAAGSEVRA) form the signal peptide. A propeptide spanning residues 29-105 (QCMEDARCRD…DPESSPQHEH (77 aa)) is cleaved from the precursor.

Belongs to the POMC family. Specific enzymatic cleavages at paired basic residues yield the different active peptides.

It localises to the secreted. Stimulates the adrenal glands to release cortisol. In terms of biological role, anorexigenic peptide. Increases the pigmentation of skin by increasing melanin production in melanocytes. Its function is as follows. Increases the pigmentation of skin by increasing melanin production in melanocytes. Functionally, endogenous orexigenic opiate. Endogenous opiate. The polypeptide is Pro-opiomelanocortin-1 (pomca) (Cyprinus carpio (Common carp)).